A 739-amino-acid polypeptide reads, in one-letter code: Adhesion G protein-coupled receptor L4 (739 aa).

The first 19 residues, 1-19 (MRLLPLLVGFSTLLNCSYT), serve as a signal peptide directing secretion. The EGF-like 1 domain maps to 20-57 (QNCSKTTCLPNAKCEVHNGVEACFCSQGYSGNGVTICE). Topologically, residues 20 to 481 (QNCSKTTCLP…DYNILTRITQ (462 aa)) are extracellular. A glycan (N-linked (GlcNAc...) asparagine) is linked at N21. 9 cysteine pairs are disulfide-bonded: C22–C33, C27–C42, C44–C56, C62–C74, C68–C83, C85–C106, C112–C124, C118–C133, and C135–C156. In terms of domain architecture, EGF-like 2; calcium-binding spans 58–107 (DIDECSESSVCGDHAVCENVNGGFSCFCREGYQTATGKSQFTPNDGSYCQ). Positions 108–157 (DIDECSESSVCGDHAVCENVNGGFSCFCREGYQTATGKSQFTPNDGSYCQ) constitute an EGF-like 3; calcium-binding domain. 7 N-linked (GlcNAc...) asparagine glycosylation sites follow: N176, N226, N237, N298, N422, N430, and N444. The GAIN-B domain occupies 293–468 (SQFDMNSTDL…AILMSSTSSI (176 aa)). Cystine bridges form between C418–C450 and C438–C452. The GPS stretch occupies residues 418 to 468 (CAFWNYSVDAMNNGSWSTEGCELTHSNDTHTSCRCSHLTHFAILMSSTSSI). A helical transmembrane segment spans residues 482 to 502 (LGIIISLICLAICIFTFWFFS). Residues 503–513 (EIQSTRTTIHK) lie on the Cytoplasmic side of the membrane. A helical membrane pass occupies residues 514–534 (NLCCSLFLAELVFLIGININT). Topologically, residues 535 to 548 (NKLVCSIIAGLLHY) are extracellular. The helical transmembrane segment at 549–569 (FFLAAFAWMCIEGIHLYLIVV) threads the bilayer. Residues 570–581 (GVIYNKGFLHKN) are Cytoplasmic-facing. The chain crosses the membrane as a helical span at residues 582–602 (FYIFGYLSPAVVVGFSASLGY). The Extracellular segment spans residues 603-622 (RYYGTTKVCWLSTENNFIWS). The chain crosses the membrane as a helical span at residues 623 to 643 (FIGPACLIILVNLLAFGVIIY). Residues 644–667 (KVFRHTAGLKPEVSCYENIRSCAR) lie on the Cytoplasmic side of the membrane. A helical membrane pass occupies residues 668–688 (GALALLFLLGTTWIFGVLHVV). At 689–695 (HASVVTA) the chain is on the extracellular side. Residues 696–716 (YLFTVSNAFQGMFIFLFLCVL) traverse the membrane as a helical segment. At 717 to 739 (SRKIQEEYYRLFKNVPCCFGCLR) the chain is on the cytoplasmic side.

The protein belongs to the G-protein coupled receptor 2 family. Adhesion G-protein coupled receptor (ADGR) subfamily. In terms of assembly, heterodimer of 2 chains generated by proteolytic processing; the large extracellular N-terminal fragment and the membrane-bound C-terminal fragment predominantly remain associated and non-covalently linked. Post-translationally, glycosylated. Proteolytically cleaved into 2 subunits, an extracellular alpha subunit and a seven-transmembrane subunit.

It localises to the cell membrane. In terms of biological role, endothelial orphan receptor that acts as a key regulator of angiogenesis. The protein is Adhesion G protein-coupled receptor L4 (Adgrl4) of Mus musculus (Mouse).